The primary structure comprises 266 residues: Large ribosomal subunit protein uL4 (266 aa).

Belongs to the universal ribosomal protein uL4 family. Part of the 50S ribosomal subunit.

Functionally, one of the primary rRNA binding proteins, this protein initially binds near the 5'-end of the 23S rRNA. It is important during the early stages of 50S assembly. It makes multiple contacts with different domains of the 23S rRNA in the assembled 50S subunit and ribosome. Forms part of the polypeptide exit tunnel. This Sulfurisphaera tokodaii (strain DSM 16993 / JCM 10545 / NBRC 100140 / 7) (Sulfolobus tokodaii) protein is Large ribosomal subunit protein uL4.